Reading from the N-terminus, the 147-residue chain is Large ribosomal subunit protein uL15 (147 aa).

A disordered region spans residues 1-62; that stretch reads MKLHELKPAQ…GQQPLSRRMP (62 aa). Composition is skewed to gly residues over residues 21 to 31 and 42 to 52; these read RGIGSGTGKTS and AGGGVRPGFEG.

This sequence belongs to the universal ribosomal protein uL15 family. Part of the 50S ribosomal subunit.

Functionally, binds to the 23S rRNA. This is Large ribosomal subunit protein uL15 from Desulfitobacterium hafniense (strain DSM 10664 / DCB-2).